We begin with the raw amino-acid sequence, 178 residues long: Interleukin-10 (178 aa).

Positions Met-1–Ala-18 are cleaved as a signal peptide. Disulfide bonds link Cys-30/Cys-126 and Cys-80/Cys-132. An N-linked (GlcNAc...) asparagine glycan is attached at Asn-67. Residue Asn-134 is glycosylated (N-linked (GlcNAc...) asparagine).

It belongs to the IL-10 family. As to quaternary structure, homodimer. Interacts with IL10RA and IL10RB.

Its subcellular location is the secreted. Major immune regulatory cytokine that acts on many cells of the immune system where it has profound anti-inflammatory functions, limiting excessive tissue disruption caused by inflammation. Mechanistically, IL10 binds to its heterotetrameric receptor comprising IL10RA and IL10RB leading to JAK1 and STAT2-mediated phosphorylation of STAT3. In turn, STAT3 translocates to the nucleus where it drives expression of anti-inflammatory mediators. Targets antigen-presenting cells (APCs) such as macrophages and monocytes and inhibits their release of pro-inflammatory cytokines including granulocyte-macrophage colony-stimulating factor /GM-CSF, granulocyte colony-stimulating factor/G-CSF, IL-1 alpha, IL-1 beta, IL-6, IL-8 and TNF-alpha. Also interferes with antigen presentation by reducing the expression of MHC-class II and co-stimulatory molecules, thereby inhibiting their ability to induce T cell activation. In addition, controls the inflammatory response of macrophages by reprogramming essential metabolic pathways including mTOR signaling. The protein is Interleukin-10 (IL10) of Cavia porcellus (Guinea pig).